The chain runs to 252 residues: Hydroxyacylglutathione hydrolase (252 aa).

His-54, His-56, Asp-58, His-59, His-111, Asp-128, and His-166 together coordinate Zn(2+).

This sequence belongs to the metallo-beta-lactamase superfamily. Glyoxalase II family. Monomer. Requires Zn(2+) as cofactor.

The enzyme catalyses an S-(2-hydroxyacyl)glutathione + H2O = a 2-hydroxy carboxylate + glutathione + H(+). The protein operates within secondary metabolite metabolism; methylglyoxal degradation; (R)-lactate from methylglyoxal: step 2/2. Functionally, thiolesterase that catalyzes the hydrolysis of S-D-lactoyl-glutathione to form glutathione and D-lactic acid. The protein is Hydroxyacylglutathione hydrolase of Aliivibrio fischeri (strain MJ11) (Vibrio fischeri).